Here is a 200-residue protein sequence, read N- to C-terminus: Large ribosomal subunit protein uL4 (200 aa).

Residues 43 to 71 (RAQKTRAEVSGSGKKPWRQKGTGRARSGD) are disordered.

This sequence belongs to the universal ribosomal protein uL4 family. As to quaternary structure, part of the 50S ribosomal subunit.

Functionally, one of the primary rRNA binding proteins, this protein initially binds near the 5'-end of the 23S rRNA. It is important during the early stages of 50S assembly. It makes multiple contacts with different domains of the 23S rRNA in the assembled 50S subunit and ribosome. Forms part of the polypeptide exit tunnel. This is Large ribosomal subunit protein uL4 from Histophilus somni (strain 129Pt) (Haemophilus somnus).